The sequence spans 132 residues: Fatty acid-binding protein, intestinal (132 aa).

Residue A2 is modified to N-acetylalanine. Positions 83 and 107 each coordinate hexadecanoate. Tetradecanoate contacts are provided by W83 and R107.

Belongs to the calycin superfamily. Fatty-acid binding protein (FABP) family. As to expression, expressed in the small intestine. Expression in the mucosal cells of the ileum extends from the midvillar region to the villus tips.

It localises to the cytoplasm. In terms of biological role, FABPs are thought to play a role in the intracellular transport of long-chain fatty acids and their acyl-CoA esters. FABP2 is probably involved in triglyceride-rich lipoprotein synthesis. Binds saturated long-chain fatty acids with a high affinity, but binds with a lower affinity to unsaturated long-chain fatty acids. FABP2 may also help maintain energy homeostasis by functioning as a lipid sensor. The protein is Fatty acid-binding protein, intestinal (Fabp2) of Rattus norvegicus (Rat).